A 355-amino-acid chain; its full sequence is Protein RecA (355 aa).

G65 to T72 is an ATP binding site. The disordered stretch occupies residues I333–E355. Positions K336–E347 are enriched in basic and acidic residues.

Belongs to the RecA family.

It localises to the cytoplasm. Its function is as follows. Can catalyze the hydrolysis of ATP in the presence of single-stranded DNA, the ATP-dependent uptake of single-stranded DNA by duplex DNA, and the ATP-dependent hybridization of homologous single-stranded DNAs. It interacts with LexA causing its activation and leading to its autocatalytic cleavage. This is Protein RecA from Staphylococcus carnosus (strain TM300).